We begin with the raw amino-acid sequence, 549 residues long: Glucose-6-phosphate isomerase (549 aa).

Glu353 acts as the Proton donor in catalysis. Active-site residues include His384 and Lys513.

The protein belongs to the GPI family.

It localises to the cytoplasm. The catalysed reaction is alpha-D-glucose 6-phosphate = beta-D-fructose 6-phosphate. Its pathway is carbohydrate biosynthesis; gluconeogenesis. It participates in carbohydrate degradation; glycolysis; D-glyceraldehyde 3-phosphate and glycerone phosphate from D-glucose: step 2/4. Catalyzes the reversible isomerization of glucose-6-phosphate to fructose-6-phosphate. In Brucella melitensis biotype 2 (strain ATCC 23457), this protein is Glucose-6-phosphate isomerase.